Reading from the N-terminus, the 608-residue chain is Glutamine--fructose-6-phosphate aminotransferase [isomerizing] (608 aa).

The active-site Nucleophile; for GATase activity is Cys2. Residues 2–218 (CGICGIVGHQ…DGDWCELTPD (217 aa)) enclose the Glutamine amidotransferase type-2 domain. SIS domains are found at residues 284–423 (MPFD…ARGT) and 456–598 (MAAV…VDQP). The active-site For Fru-6P isomerization activity is Lys603.

In terms of assembly, homodimer.

The protein resides in the cytoplasm. It catalyses the reaction D-fructose 6-phosphate + L-glutamine = D-glucosamine 6-phosphate + L-glutamate. In terms of biological role, catalyzes the first step in hexosamine metabolism, converting fructose-6P into glucosamine-6P using glutamine as a nitrogen source. The sequence is that of Glutamine--fructose-6-phosphate aminotransferase [isomerizing] from Gluconobacter oxydans (strain 621H) (Gluconobacter suboxydans).